The primary structure comprises 528 residues: Propionate catabolism operon regulatory protein (528 aa).

In terms of domain architecture, Sigma-54 factor interaction spans 218-461 (MLGQSPQMEQ…RNMMERLALF (244 aa)). 318-327 (AHGGTLFLDE) lines the ATP pocket. Positions 508 to 527 (KTAAANYLGISRTTFWRRLK) form a DNA-binding region, H-T-H motif.

Functionally, involved in the transcriptional regulation of the propionate catabolism operon. This is Propionate catabolism operon regulatory protein (prpR) from Escherichia coli (strain K12).